Consider the following 259-residue polypeptide: Acetylglutamate kinase (259 aa).

Substrate-binding positions include 46 to 47 (GG), arginine 68, and asparagine 162.

This sequence belongs to the acetylglutamate kinase family. ArgB subfamily.

It localises to the cytoplasm. The enzyme catalyses N-acetyl-L-glutamate + ATP = N-acetyl-L-glutamyl 5-phosphate + ADP. Its pathway is amino-acid biosynthesis; L-arginine biosynthesis; N(2)-acetyl-L-ornithine from L-glutamate: step 2/4. Functionally, catalyzes the ATP-dependent phosphorylation of N-acetyl-L-glutamate. This chain is Acetylglutamate kinase, found in Roseiflexus castenholzii (strain DSM 13941 / HLO8).